Here is a 577-residue protein sequence, read N- to C-terminus: Double-stranded RNA-binding protein Staufen homolog 1 (577 aa).

Ser2 carries the post-translational modification N-acetylserine. Residues 34–44 are compositionally biased toward polar residues; it reads SIPSTTSSLPS. Residues 34 to 55 form a disordered region; that stretch reads SIPSTTSSLPSENAGRPIQNSA. Positions 72–162 constitute a DRBM 1 domain; it reads TPTVELNALC…AAKALRILQN (91 aa). An Asymmetric dimethylarginine modification is found at Arg108. Arg115 carries the asymmetric dimethylarginine; alternate modification. Residue Arg115 is modified to Omega-N-methylarginine; alternate. The residue at position 176 (Ser176) is a Phosphoserine. Residues 184-251 form the DRBM 2 domain; it reads SEISQVFEIA…AIAVLEELKK (68 aa). The residue at position 278 (Ser278) is a Phosphoserine. Residues 286-354 form the DRBM 3 domain; it reads NPISRLAQIQ…AENMLEILGF (69 aa). The segment at 360 to 397 is disordered; the sequence is QPTKPALKSEEKTPIKKPGDGRKVTFFEPGSGDENGTS. Basic and acidic residues predominate over residues 366–384; that stretch reads LKSEEKTPIKKPGDGRKVT. Ser390 carries the post-translational modification Phosphoserine.

Binds tubulin. Binds with low affinity single-stranded RNA or DNA homopolymers. Interacts with CASC3 in an RNA-dependent manner. Identified in a mRNP complex, at least composed of DHX9, DDX3X, ELAVL1, HNRNPU, IGF2BP1, ILF3, PABPC1, PCBP2, PTBP2, STAU1, STAU2, SYNCRIP and YBX1. In terms of assembly, (Microbial infection) Interacts with HERV-K rec and gag proteins. As to quaternary structure, (Microbial infection) Interacts with HIV-1 GAG polyprotein. (Microbial infection) Interacts with influenza virus NS1 protein. In terms of assembly, (Microbial infection) Interacts with Ebola virus NP, VP30 and VP35. In terms of tissue distribution, widely expressed. Expressed in brain, pancreas, heart, skeletal muscles, liver, lung, kidney and placenta.

It localises to the cytoplasm. Its subcellular location is the rough endoplasmic reticulum. Its function is as follows. Binds double-stranded RNA (regardless of the sequence) and tubulin. May play a role in specific positioning of mRNAs at given sites in the cell by cross-linking cytoskeletal and RNA components, and in stimulating their translation at the site. (Microbial infection) Plays a role in virus particles production of many viruses including of HIV-1, HERV-K, ebola virus and influenza virus. Acts by interacting with various viral proteins involved in particle budding process. The polypeptide is Double-stranded RNA-binding protein Staufen homolog 1 (STAU1) (Homo sapiens (Human)).